The primary structure comprises 435 residues: Putative pyridoxal-phosphate dependent protein F13B12.4 (435 aa).

Positions 1-18 (MKLLLLALFLSISASCLA) are cleaved as a signal peptide. N-linked (GlcNAc...) asparagine glycosylation occurs at asparagine 79. An N6-(pyridoxal phosphate)lysine modification is found at lysine 89. 235-239 (GTGGT) is a pyridoxal 5'-phosphate binding site. The N-linked (GlcNAc...) asparagine glycan is linked to asparagine 277. Serine 342 contacts pyridoxal 5'-phosphate.

It belongs to the cysteine synthase/cystathionine beta-synthase family. Highly divergent.

This chain is Putative pyridoxal-phosphate dependent protein F13B12.4, found in Caenorhabditis elegans.